The chain runs to 406 residues: Tryptophan synthase beta chain (406 aa).

Position 99 is an N6-(pyridoxal phosphate)lysine (Lys-99).

Belongs to the TrpB family. In terms of assembly, tetramer of two alpha and two beta chains. Pyridoxal 5'-phosphate is required as a cofactor.

It catalyses the reaction (1S,2R)-1-C-(indol-3-yl)glycerol 3-phosphate + L-serine = D-glyceraldehyde 3-phosphate + L-tryptophan + H2O. It participates in amino-acid biosynthesis; L-tryptophan biosynthesis; L-tryptophan from chorismate: step 5/5. In terms of biological role, the beta subunit is responsible for the synthesis of L-tryptophan from indole and L-serine. Essential for production of nod factors and establishment of symbiosis. The sequence is that of Tryptophan synthase beta chain from Rhizobium etli (strain ATCC 51251 / DSM 11541 / JCM 21823 / NBRC 15573 / CFN 42).